The chain runs to 427 residues: Glutamate-1-semialdehyde 2,1-aminomutase (427 aa).

N6-(pyridoxal phosphate)lysine is present on lysine 265.

This sequence belongs to the class-III pyridoxal-phosphate-dependent aminotransferase family. HemL subfamily. In terms of assembly, homodimer. The cofactor is pyridoxal 5'-phosphate.

It localises to the cytoplasm. The enzyme catalyses (S)-4-amino-5-oxopentanoate = 5-aminolevulinate. It functions in the pathway porphyrin-containing compound metabolism; protoporphyrin-IX biosynthesis; 5-aminolevulinate from L-glutamyl-tRNA(Glu): step 2/2. The protein is Glutamate-1-semialdehyde 2,1-aminomutase of Shewanella amazonensis (strain ATCC BAA-1098 / SB2B).